We begin with the raw amino-acid sequence, 289 residues long: ATP synthase gamma chain (289 aa).

Belongs to the ATPase gamma chain family. As to quaternary structure, F-type ATPases have 2 components, CF(1) - the catalytic core - and CF(0) - the membrane proton channel. CF(1) has five subunits: alpha(3), beta(3), gamma(1), delta(1), epsilon(1). CF(0) has three main subunits: a, b and c.

Its subcellular location is the cell inner membrane. Produces ATP from ADP in the presence of a proton gradient across the membrane. The gamma chain is believed to be important in regulating ATPase activity and the flow of protons through the CF(0) complex. This is ATP synthase gamma chain from Histophilus somni (strain 2336) (Haemophilus somnus).